The chain runs to 77 residues: Acyl carrier protein (77 aa).

A Carrier domain is found at 1 to 75 (MVFEKVKDII…DVVNYIKAHT (75 aa)). Residue S35 is modified to O-(pantetheine 4'-phosphoryl)serine.

This sequence belongs to the acyl carrier protein (ACP) family. Post-translationally, 4'-phosphopantetheine is transferred from CoA to a specific serine of apo-ACP by AcpS. This modification is essential for activity because fatty acids are bound in thioester linkage to the sulfhydryl of the prosthetic group.

The protein resides in the cytoplasm. It functions in the pathway lipid metabolism; fatty acid biosynthesis. Its function is as follows. Carrier of the growing fatty acid chain in fatty acid biosynthesis. The polypeptide is Acyl carrier protein (Clostridium acetobutylicum (strain ATCC 824 / DSM 792 / JCM 1419 / IAM 19013 / LMG 5710 / NBRC 13948 / NRRL B-527 / VKM B-1787 / 2291 / W)).